A 178-amino-acid polypeptide reads, in one-letter code: Translation initiation factor IF-3 (178 aa).

This sequence belongs to the IF-3 family. In terms of assembly, monomer.

Its subcellular location is the cytoplasm. Its function is as follows. IF-3 binds to the 30S ribosomal subunit and shifts the equilibrium between 70S ribosomes and their 50S and 30S subunits in favor of the free subunits, thus enhancing the availability of 30S subunits on which protein synthesis initiation begins. This chain is Translation initiation factor IF-3, found in Macrococcus caseolyticus (strain JCSC5402) (Macrococcoides caseolyticum).